Here is a 461-residue protein sequence, read N- to C-terminus: Photosynthetic NDH subunit of subcomplex B 1, chloroplastic (461 aa).

A chloroplast-targeting transit peptide spans 1–44 (MASSLPLLPKPISPFFKTPPFSTSKPLVFLNFQTRLTSRSSDVS). Residues 66–90 (NEYGSLFADGKQDEDPRPPDNPDNP) are disordered. Over residues 75 to 85 (GKQDEDPRPPD) the composition is skewed to basic and acidic residues.

Part of the chloroplast NDH complex, composed of a mixture of chloroplast and nucleus encoded subunits. Component of the NDH subcomplex B, at least composed of PnsB1, PnsB2, PnsB3, PnsB4 and PnsB5.

The protein resides in the plastid. The protein localises to the chloroplast thylakoid membrane. Functionally, NDH shuttles electrons from NAD(P)H:plastoquinone, via FMN and iron-sulfur (Fe-S) centers, to quinones in the photosynthetic chain and possibly in a chloroplast respiratory chain. The immediate electron acceptor for the enzyme in this species is believed to be plastoquinone. Couples the redox reaction to proton translocation, and thus conserves the redox energy in a proton gradient. The polypeptide is Photosynthetic NDH subunit of subcomplex B 1, chloroplastic (Arabidopsis thaliana (Mouse-ear cress)).